The chain runs to 219 residues: Uracil-DNA glycosylase (219 aa).

Aspartate 63 acts as the Proton acceptor in catalysis.

Belongs to the uracil-DNA glycosylase (UDG) superfamily. UNG family.

It is found in the cytoplasm. It carries out the reaction Hydrolyzes single-stranded DNA or mismatched double-stranded DNA and polynucleotides, releasing free uracil.. Excises uracil residues from the DNA which can arise as a result of misincorporation of dUMP residues by DNA polymerase or due to deamination of cytosine. This chain is Uracil-DNA glycosylase, found in Mesomycoplasma hyopneumoniae (strain 7448) (Mycoplasma hyopneumoniae).